The primary structure comprises 127 residues: Small ribosomal subunit protein uS12 (127 aa).

Aspartate 89 is modified (3-methylthioaspartic acid). Residues 101–127 (ALDTSGVAGRTQRRSKYGAKRPKEAKK) are disordered. The span at 111–127 (TQRRSKYGAKRPKEAKK) shows a compositional bias: basic residues.

It belongs to the universal ribosomal protein uS12 family. As to quaternary structure, part of the 30S ribosomal subunit. Contacts proteins S8 and S17. May interact with IF1 in the 30S initiation complex.

Functionally, with S4 and S5 plays an important role in translational accuracy. Its function is as follows. Interacts with and stabilizes bases of the 16S rRNA that are involved in tRNA selection in the A site and with the mRNA backbone. Located at the interface of the 30S and 50S subunits, it traverses the body of the 30S subunit contacting proteins on the other side and probably holding the rRNA structure together. The combined cluster of proteins S8, S12 and S17 appears to hold together the shoulder and platform of the 30S subunit. The polypeptide is Small ribosomal subunit protein uS12 (Flavobacterium johnsoniae (strain ATCC 17061 / DSM 2064 / JCM 8514 / BCRC 14874 / CCUG 350202 / NBRC 14942 / NCIMB 11054 / UW101) (Cytophaga johnsonae)).